The sequence spans 214 residues: MPDFKIVISDPQSVEPKRIKVKVKASDQVKSITGEKDGKAVPQAKVNEKTKQLLNVDTLLTLEITKQEGDKKVKVKGHFKVDVDNSVPDNEVWISKTMAEKFGAEDFEAFAYRTKTLQISVDQNKATNLVGLKIGDVFEANQLIGLPVKLKITGGSDNSGFPMRFDVIGAAKRKILLSGPPGFYPNENGERRRKTIRGNTISQEIVQINTIIVR.

It belongs to the eukaryotic ribosomal protein eS6 family.

The sequence is that of Small ribosomal subunit protein eS6 from Saccharolobus solfataricus (strain ATCC 35092 / DSM 1617 / JCM 11322 / P2) (Sulfolobus solfataricus).